The primary structure comprises 323 residues: Calcium homeostasis modulator protein 2 (323 aa).

At 1-21 the chain is on the cytoplasmic side; sequence MAALIAENFRFLSLFFKSKDV. The central pore stretch occupies residues 14–39; the sequence is LFFKSKDVMIFNGLVALGTVGSQELF. Residues 22 to 43 form a helical membrane-spanning segment; the sequence is MIFNGLVALGTVGSQELFSVVA. Residues 44-52 lie on the Extracellular side of the membrane; the sequence is FHCPCSPAR. 2 disulfides stabilise this stretch: Cys46/Cys130 and Cys48/Cys162. The helical transmembrane segment at 53–76 threads the bilayer; it reads NYLYGLAAIGVPALVLFIIGIILN. The Cytoplasmic segment spans residues 77 to 101; it reads NHTWNLVAECQHRRTKNCSAAPTFL. A helical transmembrane segment spans residues 102–132; it reads LLSSILGRAAVAPVTWSVISLLRGEAYVCAL. Residues 133–179 are Extracellular-facing; sequence SEFVDPSSLTAREEHFPSAHATEILARFPCKENPDNLSDFREEVSRR. The interval 145–152 is hemichannel docking; the sequence is EEHFPSAH. The chain crosses the membrane as a helical span at residues 180–206; the sequence is LRYESQLFGWLLIGVVAILVFLTKCLK. The Cytoplasmic portion of the chain corresponds to 207–323; that stretch reads HYCSPLSYRQ…DNVEMALLPS (117 aa). Residues 214 to 251 are intersubunit interaction; the sequence is YRQEAYWAQYRANEDQLFQRTAEVHSRVLAANNVRRFF.

The protein belongs to the CALHM family. Homo-undecamer. Two undecameric hemichannels can assemble in a head-to-head manner to form a gap junction. As to expression, placenta.

It is found in the cell membrane. It catalyses the reaction ATP(in) = ATP(out). Inhibited by Ca(2+) and ruthenium red in a voltage-dependent way. Its function is as follows. Pore-forming subunit of Ca(2+) homeostasis modulator channels. Mediates ATP release from astrocytes and ATP-induced Ca(2+) influx in microglia thus regulating neuronal ATP and Ca(2+) homeostasis, synaptic transmission and neuroinflammatory response. May form intercellular gap junctions. The gating mechanism remains unknown. The protein is Calcium homeostasis modulator protein 2 of Homo sapiens (Human).